A 131-amino-acid chain; its full sequence is Conotoxin Cal8.1 (131 aa).

An N-terminal signal peptide occupies residues 1-19; sequence MKLLLTLLLGSALMCITLA. A propeptide spanning residues 20–38 is cleaved from the precursor; it reads DECGLGTHRPVKEVIDNVR.

Post-translationally, contains 4 disulfide bonds. Expressed by the venom duct.

It localises to the secreted. In terms of biological role, probable neurotoxin with unknown target. Possibly targets ion channels. The polypeptide is Conotoxin Cal8.1 (Californiconus californicus (California cone)).